Here is a 734-residue protein sequence, read N- to C-terminus: Photosystem I P700 chlorophyll a apoprotein A2 (734 aa).

A run of 8 helical transmembrane segments spans residues 46–69 (IFAS…FHVA), 135–158 (LYIG…LHLQ), 175–199 (LNHH…HVAI), 273–291 (MAHH…GHMY), 330–353 (LHFQ…QHMY), 369–395 (AALY…IFFI), 417–439 (AIIS…LYVH), and 517–535 (FLVH…LILV). Positions 559 and 568 each coordinate [4Fe-4S] cluster. Transmembrane regions (helical) follow at residues 575–596 (AFYL…YWHW) and 643–665 (LSVW…MFLI). Positions 654, 662, and 670 each coordinate chlorophyll a. Trp671 contacts phylloquinone. Residues 707–727 (LVGLAHFSVGYIFTYAAFLIA) traverse the membrane as a helical segment.

This sequence belongs to the PsaA/PsaB family. In terms of assembly, the PsaA/B heterodimer binds the P700 chlorophyll special pair and subsequent electron acceptors. PSI consists of a core antenna complex that captures photons, and an electron transfer chain that converts photonic excitation into a charge separation. The eukaryotic PSI reaction center is composed of at least 11 subunits. The cofactor is P700 is a chlorophyll a/chlorophyll a' dimer, A0 is one or more chlorophyll a, A1 is one or both phylloquinones and FX is a shared 4Fe-4S iron-sulfur center..

The protein resides in the plastid. It is found in the chloroplast thylakoid membrane. It catalyses the reaction reduced [plastocyanin] + hnu + oxidized [2Fe-2S]-[ferredoxin] = oxidized [plastocyanin] + reduced [2Fe-2S]-[ferredoxin]. In terms of biological role, psaA and PsaB bind P700, the primary electron donor of photosystem I (PSI), as well as the electron acceptors A0, A1 and FX. PSI is a plastocyanin-ferredoxin oxidoreductase, converting photonic excitation into a charge separation, which transfers an electron from the donor P700 chlorophyll pair to the spectroscopically characterized acceptors A0, A1, FX, FA and FB in turn. Oxidized P700 is reduced on the lumenal side of the thylakoid membrane by plastocyanin. The protein is Photosystem I P700 chlorophyll a apoprotein A2 of Populus alba (White poplar).